A 227-amino-acid chain; its full sequence is Lipoprotein-releasing system ATP-binding protein LolD (227 aa).

The ABC transporter domain occupies 6–227; the sequence is LTSQKLYKSY…LHEGSLYARE (222 aa). 42–49 lines the ATP pocket; the sequence is GPSGSGKS.

It belongs to the ABC transporter superfamily. Lipoprotein translocase (TC 3.A.1.125) family. As to quaternary structure, the complex is composed of two ATP-binding proteins (LolD) and two transmembrane proteins (LolC and LolE).

Its subcellular location is the cell inner membrane. Its function is as follows. Part of the ABC transporter complex LolCDE involved in the translocation of mature outer membrane-directed lipoproteins, from the inner membrane to the periplasmic chaperone, LolA. Responsible for the formation of the LolA-lipoprotein complex in an ATP-dependent manner. The chain is Lipoprotein-releasing system ATP-binding protein LolD from Legionella pneumophila (strain Paris).